The following is a 266-amino-acid chain: Undecaprenyl-diphosphatase (266 aa).

The next 8 membrane-spanning stretches (helical) occupy residues 1–21 (MDTFQVIILALIQGLTEFLPI), 39–59 (QGLAFDVAVHIGSLLAVVLYF), 83–103 (SKLAWWIILATLPAVILGFAL), 111–131 (LRGPGVIAITTVLFGLLLWWA), 144–164 (TGWKKALLIGFAQALALIPGT), 183–203 (AAARFSFLMSIPVILGAAILM), 218–238 (SLALGVGVSFVAAYTCIHLFL), and 246–266 (MTPFVIYRLALGALLCAFIFM).

This sequence belongs to the UppP family.

The protein resides in the cell inner membrane. It carries out the reaction di-trans,octa-cis-undecaprenyl diphosphate + H2O = di-trans,octa-cis-undecaprenyl phosphate + phosphate + H(+). Catalyzes the dephosphorylation of undecaprenyl diphosphate (UPP). Confers resistance to bacitracin. The chain is Undecaprenyl-diphosphatase from Shewanella woodyi (strain ATCC 51908 / MS32).